A 59-amino-acid polypeptide reads, in one-letter code: Large ribosomal subunit protein uL30 (59 aa).

It belongs to the universal ribosomal protein uL30 family. As to quaternary structure, part of the 50S ribosomal subunit.

The sequence is that of Large ribosomal subunit protein uL30 from Clostridium beijerinckii (strain ATCC 51743 / NCIMB 8052) (Clostridium acetobutylicum).